The sequence spans 608 residues: MLVWQSILLFLVGCVLSKSPTNLYTPGYVQCPEGKLTRSSLDGINSNEKAYIDRRYANAKSELSRFLHNAKMVDFDVDGFLNSNPTIGLAFSGGGYRAMLAGAGELLALDSRATNPSVLSGILQSSSYIVGLSGGSWLVGSLASNDLIPVDQLLREDKLWDIQNSLVAYYGVNIVRNTAMWGNINLQVQTKQLAGFTVSITDVYGRALSHQLLTNFDNQGASFLWSDVTETTSFQNNEMPYPILAALGREPNTVLMNFNSTVFELTPYEVGSWDPSLRSFVDTKYIGTRLDDGAPVSKRCVNGFDNAGFFMGTSSSLFNIVLQQLNNMPIPPFLKELISKFTLDPVEKLNIDIAQYNPNPFHKSNNSDTKIAQSRTLYLADGGEDGQNVPLLPLIHRKVSAIFAFDQSADKNNWPDGSALIKTFERQFSSQGDGIAFPYVPDQNTFRNTNLTSKPTFFGCDAQNLTSLTENIYDVPVVIYLANRPFTYFSNISTFKLKYSDTERQGMISNGYDVASRLNGKLDNEWAACVGCAIIRREQERLGIEQTEQCKKCFENYCWDGTIYKGEPLGDNFSDEGLTTSAAYYNSNNVAGINDGGIALVKRDDLSN.

Positions 1–17 (MLVWQSILLFLVGCVLS) are cleaved as a signal peptide. A PLA2c domain is found at 30–564 (QCPEGKLTRS…ENYCWDGTIY (535 aa)). Residues N259, N365, N450, N464, N491, and N572 are each glycosylated (N-linked (GlcNAc...) asparagine).

The protein belongs to the lysophospholipase family.

Its subcellular location is the secreted. It catalyses the reaction a 1-acyl-sn-glycero-3-phosphocholine + H2O = sn-glycerol 3-phosphocholine + a fatty acid + H(+). Functionally, catalyzes the release of fatty acids from lysophospholipids. Phospholipase B may well contribute to pathogenicity by abetting the fungus in damaging and traversing host cell membranes, processes which likely increase the rapidity of disseminated infection. The protein is Lysophospholipase 2 (PLB2) of Candida albicans (Yeast).